Here is a 370-residue protein sequence, read N- to C-terminus: Actin-related protein 2/3 complex subunit 1A (370 aa).

6 WD repeats span residues 6–45, 50–89, 140–179, 202–241, 244–284, and 322–365; these read FLLE…WVKA, EHNG…WKPT, PIRS…VDEK, GTGG…QVST, TEFL…TFVS, and LHQN…SSIQ.

Belongs to the WD repeat ARPC1 family. In terms of assembly, probable component of the Arp2/3 complex in which it may replace ARPC1B. In addition to its role in the cytoplasmic cytoskeleton, the Arp2/3 complex also promotes actin polymerization in the nucleus, thereby regulating gene transcription and repair of damaged DNA.

It is found in the cytoplasm. The protein resides in the cytoskeleton. The protein localises to the nucleus. In terms of biological role, probably functions as a component of the Arp2/3 complex which is involved in regulation of actin polymerization and together with an activating nucleation-promoting factor (NPF) mediates the formation of branched actin networks. This chain is Actin-related protein 2/3 complex subunit 1A (ARPC1A), found in Homo sapiens (Human).